Here is a 624-residue protein sequence, read N- to C-terminus: Dihydroxy-acid dehydratase (624 aa).

D81 provides a ligand contact to Mg(2+). A [2Fe-2S] cluster-binding site is contributed by C122. Residues D123 and K124 each contribute to the Mg(2+) site. Position 124 is an N6-carboxylysine (K124). Residue C195 coordinates [2Fe-2S] cluster. E499 provides a ligand contact to Mg(2+). Catalysis depends on S525, which acts as the Proton acceptor.

It belongs to the IlvD/Edd family. As to quaternary structure, homodimer. [2Fe-2S] cluster is required as a cofactor. It depends on Mg(2+) as a cofactor.

It carries out the reaction (2R)-2,3-dihydroxy-3-methylbutanoate = 3-methyl-2-oxobutanoate + H2O. The catalysed reaction is (2R,3R)-2,3-dihydroxy-3-methylpentanoate = (S)-3-methyl-2-oxopentanoate + H2O. Its pathway is amino-acid biosynthesis; L-isoleucine biosynthesis; L-isoleucine from 2-oxobutanoate: step 3/4. The protein operates within amino-acid biosynthesis; L-valine biosynthesis; L-valine from pyruvate: step 3/4. Functionally, functions in the biosynthesis of branched-chain amino acids. Catalyzes the dehydration of (2R,3R)-2,3-dihydroxy-3-methylpentanoate (2,3-dihydroxy-3-methylvalerate) into 2-oxo-3-methylpentanoate (2-oxo-3-methylvalerate) and of (2R)-2,3-dihydroxy-3-methylbutanoate (2,3-dihydroxyisovalerate) into 2-oxo-3-methylbutanoate (2-oxoisovalerate), the penultimate precursor to L-isoleucine and L-valine, respectively. The protein is Dihydroxy-acid dehydratase of Shewanella baltica (strain OS185).